A 421-amino-acid polypeptide reads, in one-letter code: C4-dicarboxylate transport protein (421 aa).

A run of 8 helical transmembrane segments spans residues 9–29, 39–59, 76–96, 145–165, 185–205, 219–239, 316–336, and 348–368; these read VQVITAVIIGVIVGLVWPDVG, FINAVKMVIAPIIFFTIVLGI, FIYFEVVTTLALIIGLFVVNI, GDILQVLFFSILFGVGLAALG, IIGYIMRAAPIGAFGAMAYTI, LMMSVYITMFLFVFVALNIIC, VFGVDLSIGQQITIILVLMLT, and FIVLASTLSALQVIPLEGLAL.

It belongs to the dicarboxylate/amino acid:cation symporter (DAACS) (TC 2.A.23) family.

It localises to the cell membrane. Responsible for the transport of succinate and fumarate, but not malate, across the membrane. The chain is C4-dicarboxylate transport protein (dctA) from Bacillus subtilis (strain 168).